We begin with the raw amino-acid sequence, 45 residues long: Caltrin-like protein 1 (45 aa).

The 38-residue stretch at 8 to 45 folds into the Kazal-like domain; that stretch reads DSDRPNCSRYVQHLYMCTKELDPVCGTDGHTYGNRSIF. N-linked (GlcNAc...) asparagine glycans are attached at residues Asn13 and Asn41.

Post-translationally, glycosylated.

The protein resides in the secreted. In terms of biological role, inhibits calcium transport into spermatozoa. The sequence is that of Caltrin-like protein 1 from Cavia porcellus (Guinea pig).